We begin with the raw amino-acid sequence, 322 residues long: 4-hydroxy-3-methylbut-2-enyl diphosphate reductase (322 aa).

A [4Fe-4S] cluster-binding site is contributed by cysteine 15. Positions 44 and 77 each coordinate (2E)-4-hydroxy-3-methylbut-2-enyl diphosphate. Residues histidine 44 and histidine 77 each coordinate dimethylallyl diphosphate. 2 residues coordinate isopentenyl diphosphate: histidine 44 and histidine 77. Cysteine 99 contributes to the [4Fe-4S] cluster binding site. Histidine 127 is a binding site for (2E)-4-hydroxy-3-methylbut-2-enyl diphosphate. Histidine 127 contributes to the dimethylallyl diphosphate binding site. Histidine 127 is an isopentenyl diphosphate binding site. Glutamate 129 serves as the catalytic Proton donor. Position 168 (threonine 168) interacts with (2E)-4-hydroxy-3-methylbut-2-enyl diphosphate. Position 198 (cysteine 198) interacts with [4Fe-4S] cluster. (2E)-4-hydroxy-3-methylbut-2-enyl diphosphate contacts are provided by serine 226, serine 227, asparagine 228, and serine 270. Positions 226, 227, 228, and 270 each coordinate dimethylallyl diphosphate. Residues serine 226, serine 227, asparagine 228, and serine 270 each coordinate isopentenyl diphosphate.

This sequence belongs to the IspH family. [4Fe-4S] cluster is required as a cofactor.

The catalysed reaction is isopentenyl diphosphate + 2 oxidized [2Fe-2S]-[ferredoxin] + H2O = (2E)-4-hydroxy-3-methylbut-2-enyl diphosphate + 2 reduced [2Fe-2S]-[ferredoxin] + 2 H(+). It catalyses the reaction dimethylallyl diphosphate + 2 oxidized [2Fe-2S]-[ferredoxin] + H2O = (2E)-4-hydroxy-3-methylbut-2-enyl diphosphate + 2 reduced [2Fe-2S]-[ferredoxin] + 2 H(+). It participates in isoprenoid biosynthesis; dimethylallyl diphosphate biosynthesis; dimethylallyl diphosphate from (2E)-4-hydroxy-3-methylbutenyl diphosphate: step 1/1. The protein operates within isoprenoid biosynthesis; isopentenyl diphosphate biosynthesis via DXP pathway; isopentenyl diphosphate from 1-deoxy-D-xylulose 5-phosphate: step 6/6. Its function is as follows. Catalyzes the conversion of 1-hydroxy-2-methyl-2-(E)-butenyl 4-diphosphate (HMBPP) into a mixture of isopentenyl diphosphate (IPP) and dimethylallyl diphosphate (DMAPP). Acts in the terminal step of the DOXP/MEP pathway for isoprenoid precursor biosynthesis. The polypeptide is 4-hydroxy-3-methylbut-2-enyl diphosphate reductase (Neisseria gonorrhoeae (strain ATCC 700825 / FA 1090)).